The sequence spans 478 residues: MAEARSGSLEYTPTWVVAFICFIIVLLSLLAERGLHHLGKCLKRRQQDALFEALQKLKEELMLLGFISLMLTVSQAAIRHICVPPALVNNMFPCKKPLEEHHAPKSSHSIINNARHLLSTGESPDHCAAKGQVPLVSVEALHQLHIFIFVLAVFHVIFCASTMVLGGARIQQWKHWEDWFKKRPSQKGTTRRGHHAHAHELFSANHEFFEMHAGGFWRRSVVISWVRSFFKQFYGSVTKSEYIALRQAFIMSHCRTNPSFDFHKYMLRTLEIDFKKVVSISWYLWLFVVVFLLLNVGGWNTYFWLSFLPLILLLMVGAKLEYIISSLALDVSEKRSRAEEAVITPSDELFWFHRPGIVLQLIHFILFQNSFEIAFFFWILFTYGIHSCIMEKLGYLIPRLVMGVLVQVLCSYSTLPLYALVTQMGSKFKKGIFDNVVQSTLEGWLEDTRNRGESTSEAHRIEMQPTTPESYNVQSENP.

Residues Met-1–Glu-10 are Extracellular-facing. Residues Tyr-11 to Ala-31 traverse the membrane as a helical segment. At Glu-32–Glu-60 the chain is on the cytoplasmic side. Residues Leu-61–Ile-81 traverse the membrane as a helical segment. Over Cys-82–His-145 the chain is Extracellular. The chain crosses the membrane as a helical span at residues Ile-146–Gly-166. Residues Gly-167–Lys-276 are Cytoplasmic-facing. Helical transmembrane passes span Val-277–Gly-297 and Gly-298–Ala-318. Residues Lys-319–Gln-360 are Cytoplasmic-facing. The chain crosses the membrane as a helical span at residues Leu-361–Phe-381. Residues Thr-382–Leu-400 are Extracellular-facing. The chain crosses the membrane as a helical span at residues Val-401–Val-421. Over Thr-422–Pro-478 the chain is Cytoplasmic. Positions Asn-435–Ser-456 are calmodulin-binding. The span at Arg-449 to Glu-462 shows a compositional bias: basic and acidic residues. Residues Arg-449–Pro-478 are disordered. Residues Gln-464 to Pro-478 show a composition bias toward polar residues.

This sequence belongs to the MLO family.

The protein localises to the membrane. In terms of biological role, may be involved in modulation of pathogen defense and leaf cell death. Activity seems to be regulated by Ca(2+)-dependent calmodulin binding and seems not to require heterotrimeric G proteins. This is MLO-like protein 13 (MLO13) from Arabidopsis thaliana (Mouse-ear cress).